The following is a 127-amino-acid chain: Large ribosomal subunit protein bL12 (127 aa).

It belongs to the bacterial ribosomal protein bL12 family. As to quaternary structure, homodimer. Part of the ribosomal stalk of the 50S ribosomal subunit. Forms a multimeric L10(L12)X complex, where L10 forms an elongated spine to which 2 to 4 L12 dimers bind in a sequential fashion. Binds GTP-bound translation factors.

In terms of biological role, forms part of the ribosomal stalk which helps the ribosome interact with GTP-bound translation factors. Is thus essential for accurate translation. In Caulobacter vibrioides (strain ATCC 19089 / CIP 103742 / CB 15) (Caulobacter crescentus), this protein is Large ribosomal subunit protein bL12.